Here is a 99-residue protein sequence, read N- to C-terminus: uncharacterized protein (99 aa).

This is an uncharacterized protein from Acidianus bottle-shaped virus (isolate Italy/Pozzuoli) (ABV).